The primary structure comprises 313 residues: Dioxygenase swnH2 (313 aa).

Fe cation is bound by residues His-155, Asp-157, and His-232.

It belongs to the PhyH family. Homodimer. Fe cation is required as a cofactor.

It functions in the pathway mycotoxin biosynthesis. In terms of biological role, aminotransferase; part of the gene cluster that mediates the biosynthesis of swainsonine (SW), a cytotoxic fungal alkaloid and a potential cancer therapy drug. Swainsonine production occurs via a multibranched pathway and is dispensable for fungal colonization of plants and infection of insect hosts. The first step of swainsonine biosynthesis is the production of the precursor pipecolic acid (PA) via conversion of L-lysine (Lys) to 1-piperideine-6-carboxylate (P6C) by the aminotransferase swnA, the latter being further reduced to PA by the reductase swnR. The PKS-NRPS hybrid synthetase swnK uptakes and condensates PA and malonyl-CoA with and without skipping of the ketoreductase (KR) domain in order to produce 3 intermediates, 1-oxoindolizidine, (1S)-1-hydroxyindolizin, and (1R)-1-hydroxyindolizine; with the transisomer (1S)-1-hydroxyindolizin being predominant. The terminal thioester reductase (TE) domain of swnK is involved in reduction of the thioester bond to release the intermediate aldehydes. The oxidoreductase swnN could contribute to the reduction of 1-oxoindolizidine to (1S)-1-hydroxyindolizin and (1R)-1-hydroxyindolizine, contributing to the major route of SW production. The dioxygenase swnH2 would be responsible for the oxidization of (1R)-1-hydroxyindolizine into (1R,2S)-1,2-dihydroxyindolizine and of (1S)-1-hydroxyindolizin to yield both (1R,2S)-1,2-dihydroxyindolizine and (1S,2S)-1,2-dihydroxyindolizine. The dioxygenase swnH1 then performs the conversion of the 1,2-dihydroxyindolizine epimers to SW. The protein is Dioxygenase swnH2 of Arthroderma benhamiae (strain ATCC MYA-4681 / CBS 112371) (Trichophyton mentagrophytes).